A 301-amino-acid polypeptide reads, in one-letter code: Probable alpha-L-glutamate ligase (301 aa).

The 184-residue stretch at 104 to 287 (LQLLSRRGVG…IASQIIAFIE (184 aa)) folds into the ATP-grasp domain. Residues K141, 178–179 (EF), D187, and 211–213 (RSN) each bind ATP. Mg(2+) contacts are provided by D248, E260, and N262. Positions 248, 260, and 262 each coordinate Mn(2+).

Belongs to the RimK family. Mg(2+) is required as a cofactor. Requires Mn(2+) as cofactor.

The protein is Probable alpha-L-glutamate ligase of Hydrogenovibrio crunogenus (strain DSM 25203 / XCL-2) (Thiomicrospira crunogena).